Consider the following 375-residue polypeptide: Anhydro-N-acetylmuramic acid kinase (375 aa).

ATP is bound at residue 12–19 (GTSLDGVD).

The protein belongs to the anhydro-N-acetylmuramic acid kinase family.

The catalysed reaction is 1,6-anhydro-N-acetyl-beta-muramate + ATP + H2O = N-acetyl-D-muramate 6-phosphate + ADP + H(+). The protein operates within amino-sugar metabolism; 1,6-anhydro-N-acetylmuramate degradation. It functions in the pathway cell wall biogenesis; peptidoglycan recycling. Catalyzes the specific phosphorylation of 1,6-anhydro-N-acetylmuramic acid (anhMurNAc) with the simultaneous cleavage of the 1,6-anhydro ring, generating MurNAc-6-P. Is required for the utilization of anhMurNAc either imported from the medium or derived from its own cell wall murein, and thus plays a role in cell wall recycling. The sequence is that of Anhydro-N-acetylmuramic acid kinase from Variovorax paradoxus (strain S110).